Reading from the N-terminus, the 463-residue chain is Exodeoxyribonuclease 7 large subunit (463 aa).

The protein belongs to the XseA family. As to quaternary structure, heterooligomer composed of large and small subunits.

The protein localises to the cytoplasm. The catalysed reaction is Exonucleolytic cleavage in either 5'- to 3'- or 3'- to 5'-direction to yield nucleoside 5'-phosphates.. Its function is as follows. Bidirectionally degrades single-stranded DNA into large acid-insoluble oligonucleotides, which are then degraded further into small acid-soluble oligonucleotides. This chain is Exodeoxyribonuclease 7 large subunit, found in Klebsiella pneumoniae (strain 342).